A 424-amino-acid polypeptide reads, in one-letter code: Calreticulin (424 aa).

The signal sequence occupies residues 1–19 (MRLLLCLIFLVFVFNFALS). Cysteines 105 and 137 form a disulfide. Residues tyrosine 109, lysine 111, tyrosine 128, and aspartate 135 each coordinate an alpha-D-glucoside. A run of 7 repeats spans residues 191–202 (IQAGNLADDWEL), 210–221 (DPKQSKPVDWVD), 227–238 (DPEDVKPAGHDD), 246–256 (PEAVKPEDWNE), 260–270 (GEWEAPTIANP), 274–284 (GEWKAKKIPNP), and 288–298 (GEWVHPLIDNP). The segment at 191 to 256 (IQAGNLADDW…EAVKPEDWNE (66 aa)) is 4 X 12 AA approximate repeats. Residues 260 to 298 (GEWEAPTIANPEYKGEWKAKKIPNPEYKGEWVHPLIDNP) form a 3 X 11 AA approximate repeats region. Glutamate 318 serves as a coordination point for an alpha-D-glucoside. Over residues 370-385 (RKKADEKLAAEKAAEK) the composition is skewed to basic and acidic residues. Positions 370–424 (RKKADEKLAAEKAAEKEAEEADEEEEEVAEEDLVKTDDKKEEVKKSTKKVDHDEL) are disordered. Acidic residues predominate over residues 386 to 400 (EAEEADEEEEEVAEE). Residues 401–424 (DLVKTDDKKEEVKKSTKKVDHDEL) show a composition bias toward basic and acidic residues. The Prevents secretion from ER motif lies at 421 to 424 (HDEL).

This sequence belongs to the calreticulin family.

Its subcellular location is the endoplasmic reticulum lumen. Functionally, molecular calcium-binding chaperone promoting folding, oligomeric assembly and quality control in the ER via the calreticulin/calnexin cycle. This lectin may interact transiently with almost all of the monoglucosylated glycoproteins that are synthesized in the ER. The polypeptide is Calreticulin (crtA) (Dictyostelium discoideum (Social amoeba)).